Here is a 448-residue protein sequence, read N- to C-terminus: Neurexin-1b-beta (448 aa).

An N-terminal signal peptide occupies residues 1–38 (MFGGWRLVVWQIFSEIITRRLGFWICLYFAALSVGMIS). The Extracellular portion of the chain corresponds to 39–375 (GSEPLVRTRH…EVFRESNGTT (337 aa)). In terms of domain architecture, Laminin G-like spans 71-269 (STYVFGRQGG…DPNVRMEGSV (199 aa)). The chain crosses the membrane as a helical span at residues 376 to 396 (GMVVGIVAGAALCILILLYAM). Residues 397–448 (YKYRNRDEGSYHVDESRNYICNSNGAALKEKNTADDDSGSKSKKNKNKEYYV) lie on the Cytoplasmic side of the membrane. A compositionally biased stretch (basic and acidic residues) spans 426-436 (EKNTADDDSGS). The segment at 426–448 (EKNTADDDSGSKSKKNKNKEYYV) is disordered.

It belongs to the neurexin family.

Its subcellular location is the membrane. Functionally, neuronal cell surface protein that may be involved in cell recognition and cell adhesion. May play a role in formation or maintenance of synaptic junctions. The chain is Neurexin-1b-beta (nrxn1b) from Danio rerio (Zebrafish).